We begin with the raw amino-acid sequence, 302 residues long: tRNA-cytidine(32) 2-sulfurtransferase (302 aa).

Residues 45–50 carry the PP-loop motif motif; the sequence is SGGKDS. [4Fe-4S] cluster-binding residues include Cys120, Cys123, and Cys211.

It belongs to the TtcA family. In terms of assembly, homodimer. Mg(2+) is required as a cofactor. Requires [4Fe-4S] cluster as cofactor.

It is found in the cytoplasm. It carries out the reaction cytidine(32) in tRNA + S-sulfanyl-L-cysteinyl-[cysteine desulfurase] + AH2 + ATP = 2-thiocytidine(32) in tRNA + L-cysteinyl-[cysteine desulfurase] + A + AMP + diphosphate + H(+). It participates in tRNA modification. Catalyzes the ATP-dependent 2-thiolation of cytidine in position 32 of tRNA, to form 2-thiocytidine (s(2)C32). The sulfur atoms are provided by the cysteine/cysteine desulfurase (IscS) system. The polypeptide is tRNA-cytidine(32) 2-sulfurtransferase (Aeromonas hydrophila subsp. hydrophila (strain ATCC 7966 / DSM 30187 / BCRC 13018 / CCUG 14551 / JCM 1027 / KCTC 2358 / NCIMB 9240 / NCTC 8049)).